Consider the following 286-residue polypeptide: CDP-diacylglycerol--serine O-phosphatidyltransferase (286 aa).

Transmembrane regions (helical) follow at residues 15–35, 95–115, 135–155, 167–187, and 207–227; these read ILPSAMTVLSICAGLTAIKFA, MLSKWPVGWVVVLLYAVCVVL, EFFVGMPAPAGAVSMIGLLAL, VWFLSFWVTGTSILLVSGIPM, and LAICAAAAVLAPYLLIWVIII.

The protein belongs to the CDP-alcohol phosphatidyltransferase class-I family.

Its subcellular location is the cell membrane. The enzyme catalyses a CDP-1,2-diacyl-sn-glycerol + L-serine = a 1,2-diacyl-sn-glycero-3-phospho-L-serine + CMP + H(+). In Mycobacterium bovis (strain ATCC BAA-935 / AF2122/97), this protein is CDP-diacylglycerol--serine O-phosphatidyltransferase (pssA).